Consider the following 96-residue polypeptide: Protein YddL (96 aa).

Positions 1–21 (MKLKIVAVVVTGLLAANVAHA) are cleaved as a signal peptide.

This Escherichia coli (strain K12) protein is Protein YddL (yddL).